The following is a 518-amino-acid chain: Serine/threonine-protein kinase PRR1 (518 aa).

Met1 is modified (N-acetylmethionine). Positions 1-12 (MDEYSSIYSQPK) are enriched in polar residues. The interval 1–59 (MDEYSSIYSQPKTPRLKQEGFPDSIGDQHEKALIDENGEEDKKMASTEGTTGDSRSTPL) is disordered. Residues 16–45 (LKQEGFPDSIGDQHEKALIDENGEEDKKMA) are compositionally biased toward basic and acidic residues. A compositionally biased stretch (polar residues) spans 47-59 (TEGTTGDSRSTPL). Ser132 is modified (phosphoserine). A Protein kinase domain is found at 192-508 (WKKVRPIGSG…INEIYESPFV (317 aa)). ATP contacts are provided by residues 198–206 (IGSGNFSTV) and Lys225. Asp354 functions as the Proton acceptor in the catalytic mechanism.

This sequence belongs to the protein kinase superfamily. CAMK Ser/Thr protein kinase family. NIM1 subfamily.

Its subcellular location is the cytoplasm. The catalysed reaction is L-seryl-[protein] + ATP = O-phospho-L-seryl-[protein] + ADP + H(+). It carries out the reaction L-threonyl-[protein] + ATP = O-phospho-L-threonyl-[protein] + ADP + H(+). Functionally, protein kinase that functions as a regulator in the pheromone-induced mating pathway downstream of mitogen-activated protein kinase (MAPK) FUS3. Diminishes transcriptional induction of genes in response to pheromone signaling. This chain is Serine/threonine-protein kinase PRR1 (PRR1), found in Saccharomyces cerevisiae (strain ATCC 204508 / S288c) (Baker's yeast).